An 89-amino-acid chain; its full sequence is Large ribosomal subunit protein bL31B (89 aa).

This sequence belongs to the bacterial ribosomal protein bL31 family. Type B subfamily. In terms of assembly, part of the 50S ribosomal subunit.

This is Large ribosomal subunit protein bL31B from Corynebacterium urealyticum (strain ATCC 43042 / DSM 7109).